The chain runs to 504 residues: Anaerobic nitric oxide reductase transcription regulator NorR (504 aa).

D57 is subject to 4-aspartylphosphate. The 230-residue stretch at 187–416 folds into the Sigma-54 factor interaction domain; that stretch reads MIGLSPGMMQ…LEHAIHRAVV (230 aa). ATP is bound by residues 215–222 and 278–287; these read GETGTGKE and ADNGTLFLDE. Positions 479–498 form a DNA-binding region, H-T-H motif; it reads WAACARALEMDVANLHRLAK.

Its pathway is nitrogen metabolism; nitric oxide reduction. Its function is as follows. Required for the expression of anaerobic nitric oxide (NO) reductase, acts as a transcriptional activator for at least the norVW operon. Activation also requires sigma-54. The protein is Anaerobic nitric oxide reductase transcription regulator NorR of Enterobacter sp. (strain 638).